Reading from the N-terminus, the 117-residue chain is Ribosome maturation factor RimP (117 aa).

This sequence belongs to the RimP family.

Its subcellular location is the cytoplasm. In terms of biological role, required for maturation of 30S ribosomal subunits. The chain is Ribosome maturation factor RimP from Rickettsia prowazekii (strain Madrid E).